A 279-amino-acid chain; its full sequence is Undecaprenyl-diphosphatase (279 aa).

8 consecutive transmembrane segments (helical) span residues 1–21 (MVLE…LPIS), 39–59 (GRFF…LYFF), 96–116 (LLLV…VRFV), 128–148 (FTMG…DALF), 155–175 (IFQI…FAII), 201–221 (FSFL…LVAG), 231–251 (YSLI…SALL), and 259–279 (FVLF…VSFF).

Belongs to the UppP family.

The protein resides in the cell membrane. It catalyses the reaction di-trans,octa-cis-undecaprenyl diphosphate + H2O = di-trans,octa-cis-undecaprenyl phosphate + phosphate + H(+). Functionally, catalyzes the dephosphorylation of undecaprenyl diphosphate (UPP). Confers resistance to bacitracin. This Tropheryma whipplei (strain Twist) (Whipple's bacillus) protein is Undecaprenyl-diphosphatase.